We begin with the raw amino-acid sequence, 573 residues long: Potassium-transporting ATPase potassium-binding subunit (573 aa).

Helical transmembrane passes span 6-26 (ILFALFIVTIALITKPLGSYI), 66-86 (FFSLVSFSVMAFIFVLVILLL), 135-155 (ALAVQNFVSAAVGLCVAIALI), 177-197 (VFWILLPISIVIAIVYIFQGV), 257-277 (IQMVSIFAIAAALTYTFGKWV), 283-303 (GWLIFGVMLVLFIISLVVMTI), 382-402 (IFGGVGAGFYGFFMFLMLAVF), 428-448 (MFALLISLCCVLVFTGLAAVI), 493-513 (ITIALSMLIGRFGVIFAVIML), and 537-557 (FIFAILVFFTILLIGGLTIFP).

Belongs to the KdpA family. The system is composed of three essential subunits: KdpA, KdpB and KdpC.

The protein localises to the cell inner membrane. Part of the high-affinity ATP-driven potassium transport (or Kdp) system, which catalyzes the hydrolysis of ATP coupled with the electrogenic transport of potassium into the cytoplasm. This subunit binds the periplasmic potassium ions and delivers the ions to the membrane domain of KdpB through an intramembrane tunnel. The polypeptide is Potassium-transporting ATPase potassium-binding subunit (Francisella tularensis subsp. tularensis (strain WY96-3418)).